Consider the following 37-residue polypeptide: Large ribosomal subunit protein bL36 (37 aa).

This sequence belongs to the bacterial ribosomal protein bL36 family.

This Solidesulfovibrio magneticus (strain ATCC 700980 / DSM 13731 / RS-1) (Desulfovibrio magneticus) protein is Large ribosomal subunit protein bL36.